The chain runs to 181 residues: Photosystem I assembly protein Ycf4 (181 aa).

Transmembrane regions (helical) follow at residues 19–41 (YAWCFILMTGGIGFCLTGVGSYF) and 61–83 (IVMMFYGTIAILFSLFLMYSIFT).

Belongs to the Ycf4 family.

It is found in the plastid. The protein localises to the chloroplast thylakoid membrane. In terms of biological role, seems to be required for the assembly of the photosystem I complex. This Guillardia theta (Cryptophyte) protein is Photosystem I assembly protein Ycf4.